Consider the following 319-residue polypeptide: Phospho-N-acetylmuramoyl-pentapeptide-transferase (319 aa).

Transmembrane regions (helical) follow at residues 1–21, 53–73, 77–97, 117–137, 140–160, 172–192, 195–215, 221–241, 249–269, and 298–318; these read MSIL…FLLM, TMGG…VGAW, LNGT…IGMW, FLAQ…EGFQ, FGLT…MVGF, GLVT…ALVQ, TEVA…FPFN, IFMG…VALV, LIIG…VAYF, and GVFW…ILFL.

Belongs to the glycosyltransferase 4 family. MraY subfamily. Requires Mg(2+) as cofactor.

The protein localises to the cell membrane. The enzyme catalyses UDP-N-acetyl-alpha-D-muramoyl-L-alanyl-gamma-D-glutamyl-L-lysyl-D-alanyl-D-alanine + di-trans,octa-cis-undecaprenyl phosphate = Mur2Ac(oyl-L-Ala-gamma-D-Glu-L-Lys-D-Ala-D-Ala)-di-trans,octa-cis-undecaprenyl diphosphate + UMP. Its pathway is cell wall biogenesis; peptidoglycan biosynthesis. In terms of biological role, catalyzes the initial step of the lipid cycle reactions in the biosynthesis of the cell wall peptidoglycan: transfers peptidoglycan precursor phospho-MurNAc-pentapeptide from UDP-MurNAc-pentapeptide onto the lipid carrier undecaprenyl phosphate, yielding undecaprenyl-pyrophosphoryl-MurNAc-pentapeptide, known as lipid I. This chain is Phospho-N-acetylmuramoyl-pentapeptide-transferase, found in Limosilactobacillus fermentum (strain NBRC 3956 / LMG 18251) (Lactobacillus fermentum).